Here is a 136-residue protein sequence, read N- to C-terminus: HetP-like commitment protein Alr2902 (136 aa).

Polar residues predominate over residues 94–109 (KASTQDLNQSNNSDYL). The segment at 94-120 (KASTQDLNQSNNSDYLTTPEPDKRGNI) is disordered.

The protein belongs to the HetP family. As to quaternary structure, in bacterial two-hybrid assays interacts robustly with HetR and Alr3234 and weakly with itself, HetP and Asl1930.

In terms of biological role, delays heterocyst differentiation and commitment when nitrogen is limiting. Interplay between the 4 HetP paralogs controls the timing of commitment to heterocyst formation and its duration. Epistatic analysis show that the 3 paralogs act upstream of hetP to delay commitment (asl1930, alr3234) or inhibit development (alr2902). Asl1930 and Alr3234 must also attenuate the activity of Alr2902. When only this homolog is present no heterocysts are formed, showing it inhibits development. Ectopic expression partially complements a hetP deletion. This is HetP-like commitment protein Alr2902 from Nostoc sp. (strain PCC 7120 / SAG 25.82 / UTEX 2576).